The following is a 194-amino-acid chain: MTVTTEDRTTGARPVPRLKQRYREEIAATLREEFSYRNVMQIPGVVKVVVNMGVGDAARDAKLIDGAVRDLAAITGQKPAVRRAKKSIAQFKLREGMPIGAKVTLRGDRMWEFLDRLVSIALPRIRDFRGLSPKQFDGAGNYTFGVTEQSIFHEIDIDRIDRVRGMDITVVTTATTDDEGRALLRALGFPFREN.

The protein belongs to the universal ribosomal protein uL5 family. Part of the 50S ribosomal subunit; part of the 5S rRNA/L5/L18/L25 subcomplex. Contacts the 5S rRNA and the P site tRNA. Forms a bridge to the 30S subunit in the 70S ribosome.

Its function is as follows. This is one of the proteins that bind and probably mediate the attachment of the 5S RNA into the large ribosomal subunit, where it forms part of the central protuberance. In the 70S ribosome it contacts protein S13 of the 30S subunit (bridge B1b), connecting the 2 subunits; this bridge is implicated in subunit movement. Contacts the P site tRNA; the 5S rRNA and some of its associated proteins might help stabilize positioning of ribosome-bound tRNAs. This Frankia alni (strain DSM 45986 / CECT 9034 / ACN14a) protein is Large ribosomal subunit protein uL5.